A 96-amino-acid polypeptide reads, in one-letter code: Large ribosomal subunit protein uL23 (96 aa).

Belongs to the universal ribosomal protein uL23 family. Part of the 50S ribosomal subunit. Contacts protein L29, and trigger factor when it is bound to the ribosome.

One of the early assembly proteins it binds 23S rRNA. One of the proteins that surrounds the polypeptide exit tunnel on the outside of the ribosome. Forms the main docking site for trigger factor binding to the ribosome. This chain is Large ribosomal subunit protein uL23, found in Alkaliphilus metalliredigens (strain QYMF).